The chain runs to 100 residues: Cell division protein DrpB (100 aa).

At 1 to 16 (MEYGSTKMEERLSRSP) the chain is on the cytoplasmic side. A helical transmembrane segment spans residues 17-37 (GGKLALWAFYTWCGYFVWAMA). Residues 38-64 (RYIWVMSRIPDAPVSGFESDLGSTAGK) are Periplasmic-facing. A helical transmembrane segment spans residues 65-85 (WLGALVGFLFMALVGALLGSI). At 86–100 (AWYTRPRPARSRRYE) the chain is on the cytoplasmic side.

The protein belongs to the DrpB family. In terms of assembly, bacterial adenylate cyclase hybrid (BACTH) studies show interaction of this protein with DamX, FtsI, FtsN, FtsQ, YmgF, DedD, FtsA and MalF, as well as weaker interactions with DedD, MalG and PBP2, but this assay often generates false positive results.

Its subcellular location is the cell inner membrane. Its function is as follows. A non-essential division protein that localizes to the septal ring in low ionic strength medium. Functionally, localizes to the septal ring in about 30% of observed cells before cell constriction occurs; localization occurs in low ionic strength medium (0 NaCl) and requires FtsZ but not FtsEX. Overexpression partially restores correct FtsI localization to the division septum in an ftsEX deletion. Isolated as a multicopy suppressor of an ftsEX deletion mutant; it does not suppress other cell division defects (e.g. ftsA, ftsI, ftsQ or ftsZ). The sequence is that of Cell division protein DrpB from Escherichia coli (strain K12).